A 440-amino-acid chain; its full sequence is Chorismate synthase 1, chloroplastic (440 aa).

Residues 1 to 54 (MASFVPTKQFVGASSSSDIGSSRLVSLQLPSKFSSSNFHLPSRPSQLKRLEIQA) constitute a chloroplast transit peptide. The tract at residues 100 to 147 (RRRPGQSRITTPRKETDTCKISSGTADGLTTGSPIKVEVPNTDQRGND) is disordered. Residues 118 to 132 (CKISSGTADGLTTGS) are compositionally biased toward polar residues.

The protein belongs to the chorismate synthase family. Homotetramer. Requires FMNH2 as cofactor. As to expression, predominantly expressed in flowers and roots and, to a lesser extent, in stems, leaves, and cotyledons.

It is found in the plastid. The protein localises to the chloroplast. It catalyses the reaction 5-O-(1-carboxyvinyl)-3-phosphoshikimate = chorismate + phosphate. It participates in metabolic intermediate biosynthesis; chorismate biosynthesis; chorismate from D-erythrose 4-phosphate and phosphoenolpyruvate: step 7/7. In terms of biological role, catalyzes the last common step of the biosynthesis of aromatic amino acids, produced via the shikimic acid pathway. This Solanum lycopersicum (Tomato) protein is Chorismate synthase 1, chloroplastic (CS1).